Reading from the N-terminus, the 657-residue chain is tRNA 5-methylaminomethyl-2-thiouridine biosynthesis bifunctional protein MnmC (657 aa).

The segment at 1–233 (MPRALEPAEP…KWQMTVASFR (233 aa)) is tRNA (mnm(5)s(2)U34)-methyltransferase. The tract at residues 257 to 657 (IGAGLAGCAV…LRALRHGHTG (401 aa)) is FAD-dependent cmnm(5)s(2)U34 oxidoreductase.

It in the N-terminal section; belongs to the methyltransferase superfamily. tRNA (mnm(5)s(2)U34)-methyltransferase family. In the C-terminal section; belongs to the DAO family. FAD is required as a cofactor.

It is found in the cytoplasm. The catalysed reaction is 5-aminomethyl-2-thiouridine(34) in tRNA + S-adenosyl-L-methionine = 5-methylaminomethyl-2-thiouridine(34) in tRNA + S-adenosyl-L-homocysteine + H(+). Catalyzes the last two steps in the biosynthesis of 5-methylaminomethyl-2-thiouridine (mnm(5)s(2)U) at the wobble position (U34) in tRNA. Catalyzes the FAD-dependent demodification of cmnm(5)s(2)U34 to nm(5)s(2)U34, followed by the transfer of a methyl group from S-adenosyl-L-methionine to nm(5)s(2)U34, to form mnm(5)s(2)U34. In Cupriavidus necator (strain ATCC 17699 / DSM 428 / KCTC 22496 / NCIMB 10442 / H16 / Stanier 337) (Ralstonia eutropha), this protein is tRNA 5-methylaminomethyl-2-thiouridine biosynthesis bifunctional protein MnmC.